Consider the following 94-residue polypeptide: MGPPSGKTYMGWWGHMGGPKQKGITSYAVSPYAQKPLQGIFHNAVFNSFRRFKSQFLYVLIPAGIYWYWWKNGNEYNEFLYSKAGREELERVNV.

Residues 2–49 (GPPSGKTYMGWWGHMGGPKQKGITSYAVSPYAQKPLQGIFHNAVFNSF) are Mitochondrial matrix-facing. A helical transmembrane segment spans residues 50 to 80 (RRFKSQFLYVLIPAGIYWYWWKNGNEYNEFL). Residues 81–94 (YSKAGREELERVNV) are Mitochondrial intermembrane-facing.

The protein belongs to the UQCRQ/QCR8 family. As to quaternary structure, component of the ubiquinol-cytochrome c oxidoreductase (cytochrome b-c1 complex, complex III, CIII), a multisubunit enzyme composed of 10 subunits. The complex is composed of 3 respiratory subunits cytochrome b (COB), cytochrome c1 (CYT1) and Rieske protein (RIP1), 2 core protein subunits COR1 and QCR2, and 5 low-molecular weight protein subunits QCR6, QCR7, QCR8, QCR9 and QCR10. The complex exists as an obligatory dimer and forms supercomplexes (SCs) in the inner mitochondrial membrane with a monomer or a dimer of cytochrome c oxidase (complex IV, CIV), resulting in 2 different assemblies (supercomplexes III(2)IV and III(2)IV(2)).

Its subcellular location is the mitochondrion inner membrane. In terms of biological role, component of the ubiquinol-cytochrome c oxidoreductase, a multisubunit transmembrane complex that is part of the mitochondrial electron transport chain which drives oxidative phosphorylation. The respiratory chain contains 3 multisubunit complexes succinate dehydrogenase (complex II, CII), ubiquinol-cytochrome c oxidoreductase (cytochrome b-c1 complex, complex III, CIII) and cytochrome c oxidase (complex IV, CIV), that cooperate to transfer electrons derived from NADH and succinate to molecular oxygen, creating an electrochemical gradient over the inner membrane that drives transmembrane transport and the ATP synthase. The cytochrome b-c1 complex catalyzes electron transfer from ubiquinol to cytochrome c, linking this redox reaction to translocation of protons across the mitochondrial inner membrane, with protons being carried across the membrane as hydrogens on the quinol. In the process called Q cycle, 2 protons are consumed from the matrix, 4 protons are released into the intermembrane space and 2 electrons are passed to cytochrome c. The polypeptide is Cytochrome b-c1 complex subunit 8, mitochondrial (QCR8) (Saccharomyces cerevisiae (strain ATCC 204508 / S288c) (Baker's yeast)).